The chain runs to 393 residues: Reticulon-like protein 2 (393 aa).

Residues 1 to 21 (MNRNTTTNKNANLNNSRNANA) show a composition bias toward low complexity. The segment at 1–25 (MNRNTTTNKNANLNNSRNANAPGEA) is disordered. At 1–60 (MNRNTTTNKNANLNNSRNANAPGEAGHQNKTGLIYWTNPSKSGASFAATLVSLLILRNVN) the chain is on the cytoplasmic side. Residues 30 to 236 (KTGLIYWTNP…SISNENKSST (207 aa)) enclose the Reticulon domain. Residues 61-81 (VISVLLKIGYMVLFTSFAVEL) traverse the membrane as a helical segment. The Lumenal portion of the chain corresponds to 82–149 (STKVLFDKGV…IGVSLYFLHG (68 aa)). N-linked (GlcNAc...) asparagine glycosylation occurs at Asn137. A helical transmembrane segment spans residues 150–170 (LFAIFSMNTVLIMTTIFLYTV). At 171-393 (PLIYDRKQAR…HGLKQKLQHA (223 aa)) the chain is on the cytoplasmic side. Disordered regions lie at residues 214-313 (IIPP…DVKT) and 339-393 (GDYN…LQHA). Residues 220 to 285 (DEGSYSTSIS…PVSQNENIGT (66 aa)) show a composition bias toward polar residues. At Ser278 the chain carries Phosphoserine. The span at 289-313 (GKQEIPTEKDFNNRHENFSKPDVKT) shows a compositional bias: basic and acidic residues. A compositionally biased stretch (polar residues) spans 365–376 (PAESQSIPIKNN). Residues 381-393 (KTTHGLKQKLQHA) are compositionally biased toward basic residues.

The protein resides in the endoplasmic reticulum membrane. The protein is Reticulon-like protein 2 (RTN2) of Saccharomyces cerevisiae (strain ATCC 204508 / S288c) (Baker's yeast).